The chain runs to 509 residues: Angiopoietin-4 (509 aa).

Positions 1–21 (MLCQPAMLLDGLLLLATMAAA) are cleaved as a signal peptide. Asn-105, Asn-135, Asn-149, Asn-167, Asn-256, Asn-306, Asn-317, and Asn-417 each carry an N-linked (GlcNAc...) asparagine glycan. Positions 181–269 (LSTNKLERQM…LQQQQQQLTE (89 aa)) form a coiled coil. The Fibrinogen C-terminal domain occupies 288–508 (KTPKPVFQDC…GTRMMLRPMG (221 aa)). Cys-297 and Cys-326 are joined by a disulfide. The segment at 416 to 436 (VNDSSSSAGRKNSLAPQGTKF) is disordered. Residues Cys-450 and Cys-463 are joined by a disulfide bond.

In terms of assembly, homodimer; disulfide-linked. Interacts with TEK/TIE2. As to expression, widely expressed.

It localises to the secreted. Functionally, binds to TEK/TIE2, modulating ANGPT1 signaling. Can induce tyrosine phosphorylation of TEK/TIE2. Promotes endothelial cell survival, migration and angiogenesis. This chain is Angiopoietin-4 (Angpt4), found in Mus musculus (Mouse).